The chain runs to 61 residues: MAKDIITGRKTVFGNKRSKALNSVRRSWKPNLQKVRILVDGKPKRVWVSARALKSGKVKRV.

It belongs to the bacterial ribosomal protein bL28 family.

In Lactobacillus johnsonii (strain CNCM I-12250 / La1 / NCC 533), this protein is Large ribosomal subunit protein bL28.